The primary structure comprises 154 residues: Ribosome maturation factor RimP (154 aa).

It belongs to the RimP family.

The protein resides in the cytoplasm. Required for maturation of 30S ribosomal subunits. In Clostridium perfringens (strain SM101 / Type A), this protein is Ribosome maturation factor RimP.